We begin with the raw amino-acid sequence, 446 residues long: Histidinol dehydrogenase homolog (446 aa).

Histidine 266 lines the Zn(2+) pocket. Residues glutamate 334 and histidine 335 each act as proton acceptor in the active site. Residue histidine 427 participates in Zn(2+) binding.

This sequence belongs to the histidinol dehydrogenase family. It depends on Zn(2+) as a cofactor.

This chain is Histidinol dehydrogenase homolog, found in Colwellia psychrerythraea (strain 34H / ATCC BAA-681) (Vibrio psychroerythus).